Consider the following 145-residue polypeptide: MQFNIQDIIKMLPHSYPFLLLDKVTACVPNESATAIKNVTFNEPFFIGHFPNNPVMPGVLIVEAMAQACLVCVMSDSKHNFENYTIYFMSIELAKFRKPVIPGDILTIEVNVIHKRKDTCRFQCFARVDQALASEAQILAMIKKN.

Residue H49 is part of the active site.

Belongs to the thioester dehydratase family. FabZ subfamily.

The protein localises to the cytoplasm. The catalysed reaction is a (3R)-hydroxyacyl-[ACP] = a (2E)-enoyl-[ACP] + H2O. Involved in unsaturated fatty acids biosynthesis. Catalyzes the dehydration of short chain beta-hydroxyacyl-ACPs and long chain saturated and unsaturated beta-hydroxyacyl-ACPs. This chain is 3-hydroxyacyl-[acyl-carrier-protein] dehydratase FabZ, found in Ehrlichia ruminantium (strain Gardel).